The primary structure comprises 51 residues: ATP synthase F(1) complex subunit epsilon, mitochondrial (51 aa).

N6-acetyllysine; alternate is present on residues K21, K32, and K37. 3 positions are modified to N6-succinyllysine; alternate: K21, K32, and K37. Residue K44 is modified to N6-acetyllysine.

Belongs to the eukaryotic ATPase epsilon family. Component of the ATP synthase complex composed at least of ATP5F1A/subunit alpha, ATP5F1B/subunit beta, ATP5MC1/subunit c (homooctomer), MT-ATP6/subunit a, MT-ATP8/subunit 8, ATP5ME/subunit e, ATP5MF/subunit f, ATP5MG/subunit g, ATP5MK/subunit k, ATP5MJ/subunit j, ATP5F1C/subunit gamma, ATP5F1D/subunit delta, ATP5F1E/subunit epsilon, ATP5PF/subunit F6, ATP5PB/subunit b, ATP5PD/subunit d, ATP5PO/subunit OSCP. ATP synthase complex consists of a soluble F(1) head domain (subunits alpha(3) and beta(3)) - the catalytic core - and a membrane F(0) domain - the membrane proton channel (subunits c, a, 8, e, f, g, k and j). These two domains are linked by a central stalk (subunits gamma, delta, and epsilon) rotating inside the F1 region and a stationary peripheral stalk (subunits F6, b, d, and OSCP).

Its subcellular location is the mitochondrion. It is found in the mitochondrion inner membrane. Functionally, subunit epsilon, of the mitochondrial membrane ATP synthase complex (F(1)F(0) ATP synthase or Complex V) that produces ATP from ADP in the presence of a proton gradient across the membrane which is generated by electron transport complexes of the respiratory chain. ATP synthase complex consist of a soluble F(1) head domain - the catalytic core - and a membrane F(1) domain - the membrane proton channel. These two domains are linked by a central stalk rotating inside the F(1) region and a stationary peripheral stalk. During catalysis, ATP synthesis in the catalytic domain of F(1) is coupled via a rotary mechanism of the central stalk subunits to proton translocation. In vivo, can only synthesize ATP although its ATP hydrolase activity can be activated artificially in vitro. May be essential for the assembly of F(1) and may play an important role in the incorporation of the hydrophobic subunit c into the F(1)-c oligomer rotor of the mitochondrial ATP synthase complex. The polypeptide is ATP synthase F(1) complex subunit epsilon, mitochondrial (Bos taurus (Bovine)).